A 146-amino-acid polypeptide reads, in one-letter code: UPF0178 protein BT9727_2823 (146 aa).

The protein belongs to the UPF0178 family.

In Bacillus thuringiensis subsp. konkukian (strain 97-27), this protein is UPF0178 protein BT9727_2823.